The sequence spans 140 residues: Small ribosomal subunit protein uS19 (140 aa).

The disordered stretch occupies residues 43–71 (IERGLTTEQQKLRETVRDADPQKTANDPI). The span at 52-63 (QKLRETVRDADP) shows a compositional bias: basic and acidic residues.

This sequence belongs to the universal ribosomal protein uS19 family.

In terms of biological role, protein S19 forms a complex with S13 that binds strongly to the 16S ribosomal RNA. This Haloquadratum walsbyi (strain DSM 16790 / HBSQ001) protein is Small ribosomal subunit protein uS19.